The primary structure comprises 688 residues: Coiled-coil domain-containing protein 157 (688 aa).

Residues 143–153 (ANQGETLTSKP) are compositionally biased toward polar residues. Disordered stretches follow at residues 143–162 (ANQG…PAGS), 168–189 (AQLV…ERDS), 322–341 (QAAR…QWER), 366–385 (QQRE…QAEA), and 592–688 (QGAE…ERPT). The stretch at 288-572 (KLVGLLRAQL…LSKIREVAQQ (285 aa)) forms a coiled coil. A compositionally biased stretch (polar residues) spans 369 to 382 (ESTQAVESKAQQLQ). Positions 671 to 680 (SPSSGRASPA) are enriched in low complexity.

This is Coiled-coil domain-containing protein 157 (CCDC157) from Bos taurus (Bovine).